The sequence spans 317 residues: Porphobilinogen deaminase (317 aa).

Cysteine 245 bears the S-(dipyrrolylmethanemethyl)cysteine mark.

This sequence belongs to the HMBS family. Monomer. Dipyrromethane serves as cofactor.

It carries out the reaction 4 porphobilinogen + H2O = hydroxymethylbilane + 4 NH4(+). The protein operates within porphyrin-containing compound metabolism; protoporphyrin-IX biosynthesis; coproporphyrinogen-III from 5-aminolevulinate: step 2/4. It functions in the pathway porphyrin-containing compound metabolism; chlorophyll biosynthesis. Its function is as follows. Tetrapolymerization of the monopyrrole PBG into the hydroxymethylbilane pre-uroporphyrinogen in several discrete steps. This chain is Porphobilinogen deaminase, found in Synechococcus sp. (strain CC9902).